The following is a 316-amino-acid chain: Methionyl-tRNA formyltransferase (316 aa).

Residue 112-115 coordinates (6S)-5,6,7,8-tetrahydrofolate; sequence SLLP.

The protein belongs to the Fmt family.

It carries out the reaction L-methionyl-tRNA(fMet) + (6R)-10-formyltetrahydrofolate = N-formyl-L-methionyl-tRNA(fMet) + (6S)-5,6,7,8-tetrahydrofolate + H(+). Its function is as follows. Attaches a formyl group to the free amino group of methionyl-tRNA(fMet). The formyl group appears to play a dual role in the initiator identity of N-formylmethionyl-tRNA by promoting its recognition by IF2 and preventing the misappropriation of this tRNA by the elongation apparatus. This chain is Methionyl-tRNA formyltransferase, found in Flavobacterium psychrophilum (strain ATCC 49511 / DSM 21280 / CIP 103535 / JIP02/86).